Here is a 70-residue protein sequence, read N- to C-terminus: Small ribosomal subunit protein bS21 (70 aa).

The protein belongs to the bacterial ribosomal protein bS21 family.

The polypeptide is Small ribosomal subunit protein bS21 (Nitrosospira multiformis (strain ATCC 25196 / NCIMB 11849 / C 71)).